Here is a 148-residue protein sequence, read N- to C-terminus: ATP synthase epsilon chain (148 aa).

It belongs to the ATPase epsilon chain family. In terms of assembly, F-type ATPases have 2 components, CF(1) - the catalytic core - and CF(0) - the membrane proton channel. CF(1) has five subunits: alpha(3), beta(3), gamma(1), delta(1), epsilon(1). CF(0) has three main subunits: a, b and c.

It localises to the cell membrane. Its function is as follows. Produces ATP from ADP in the presence of a proton gradient across the membrane. The sequence is that of ATP synthase epsilon chain from Streptococcus thermophilus (strain ATCC BAA-491 / LMD-9).